The following is a 5112-amino-acid chain: Malformin synthetase mlfA (5112 aa).

Residues 225-616 (ERHAANRPHS…CGRADTQVKL (392 aa)) form an adenylation 1 region. Residues 757-830 (SRLEQEIQLA…EAASLAEVQE (74 aa)) enclose the Carrier 1 domain. Ser-791 bears the O-(pantetheine 4'-phosphoryl)serine mark. Residues 868–1299 (EDVFPCTTMQ…ALDSLTLLQA (432 aa)) form a condensation 1 region. The tract at residues 1327 to 1716 (DRRVTRQPDT…GRKDTQVKLR (390 aa)) is adenylation 2. In terms of domain architecture, Carrier 2 spans 1854 to 1931 (TAASELERTL…QLAAELGESP (78 aa)). Residue Ser-1891 is modified to O-(pantetheine 4'-phosphoryl)serine. 2 disordered regions span residues 1926–1961 (ELGESPRSSTSSASSSTEDEFTISTPDDSSTNDGVD) and 1994–2034 (GGSS…VPEP). 2 stretches are compositionally biased toward low complexity: residues 1930–1941 (SPRSSTSSASSS) and 1994–2012 (GGSSSSKTPSVSSSSSSSS). A condensation 2 region spans residues 2064-2479 (EDIYPATALQ…AVSYSDKQTL (416 aa)). The adenylation 3 stretch occupies residues 2502-2894 (IRTPHAPAVC…IGRRDGQVKL (393 aa)). Residues 3030–3106 (RPTTAKECEM…QLLFHLRNAK (77 aa)) form the Carrier 3 domain. Ser-3067 is subject to O-(pantetheine 4'-phosphoryl)serine. Condensation regions lie at residues 3122–3586 (WVDL…TYEQ) and 3607–4044 (NIYP…EQLV). The adenylation 4 stretch occupies residues 4069-4459 (HSSRQAVCAW…VGRKDNQIKF (391 aa)). The 77-residue stretch at 4593–4669 (MPSTEAECIM…DLARHNSLVQ (77 aa)) folds into the Carrier 4 domain. Ser-4630 bears the O-(pantetheine 4'-phosphoryl)serine mark. Residues 4724–5106 (IVVDIPGRIS…VEKVVALLRD (383 aa)) are condensation 5.

The protein belongs to the NRP synthetase family.

Its pathway is secondary metabolite biosynthesis. In terms of biological role, nonribosomal peptide synthetase; part of the gene cluster that mediates the biosynthesis of malformins, cyclic pentapeptides with a disulfide bond between 2 consecutive cysteins, that show potential anti-tumor as well as antimalarial and antitrypanosomal properties. The nonribosomal peptide synthetase mlfA is responsible of the formation of the cyclic pentapeptide. MlfA probably acts iteratively on one amino acid and possesses multiple amino acid specificities since it is involved in the biosynthesis of multiple malformins, including malformin C and malformin A2. Malformin C corresponds to a cyclo[D-Cys-D-Cys-Val-D-Leu-Val] pentapeptide whereas malformin A2 corresponds to a cyclo[D-Cys-D-Cys-Val-D-Leu-Ile] pentapeptide. The malformin biosynthesis clusters in malformin-producing fungi also contain enzymes involved in the formation of the disulfide bond between the two consecutive cysteins within malformins, in addition to additional tailoring enzymes such as methyltransferases or oxidoreductases. They are also composed of up to 4 major facilitator superfamily transporters, and transcription factors probably involved in the regulation of the expression of those clusters. The chain is Malformin synthetase mlfA from Aspergillus brasiliensis (strain CBS 101740 / IMI 381727 / IBT 21946).